A 230-amino-acid polypeptide reads, in one-letter code: Transcription factor bHLH147 (230 aa).

Polar residues predominate over residues 1-17 (MESISPVSNQLLQPTTT). Positions 1-52 (MESISPVSNQLLQPTTTSSNSDRSRRKRKKKSSPSSVEKSPSPSISLEKWRS) are disordered. Positions 33-46 (SPSSVEKSPSPSIS) are enriched in low complexity. A bHLH domain is found at 147–196 (KQRATVLRLKAKGLPAVQRKVKVLSRLVPGCRKQSLPVVLEETTDYIAAM). The disordered stretch occupies residues 210-230 (VSSSPPPPTPGHEGGQTHMLG).

As to quaternary structure, homodimer. Interacts with PRE3.

The protein resides in the nucleus. In terms of biological role, atypical bHLH transcription factor probably unable to bind DNA. Negatively regulates brassinosteroid signaling. The protein is Transcription factor bHLH147 (BHLH147) of Arabidopsis thaliana (Mouse-ear cress).